The chain runs to 162 residues: Xylulose kinase (162 aa).

Residues 16 to 39 (GGHSATPRPATGPAGPAAHSGRHQ) form a disordered region. Positions 20–33 (ATPRPATGPAGPAA) are enriched in low complexity.

Belongs to the FGGY kinase family.

The enzyme catalyses D-xylulose + ATP = D-xylulose 5-phosphate + ADP + H(+). In terms of biological role, catalyzes the phosphorylation of D-xylulose to D-xylulose 5-phosphate. This Actinoplanes sp. (strain ATCC 31351 / 3876) (Ampullariella sp.) protein is Xylulose kinase.